The following is a 268-amino-acid chain: Small ribosomal subunit protein eS1 (268 aa).

Positions 1–21 (MAVGKNKGLSKGGKKGGKKKV) are disordered.

It belongs to the eukaryotic ribosomal protein eS1 family. Component of the small ribosomal subunit. Mature ribosomes consist of a small (40S) and a large (60S) subunit. The 40S subunit contains about 33 different proteins and 1 molecule of RNA (18S). The 60S subunit contains about 49 different proteins and 3 molecules of RNA (28S, 5.8S and 5S).

It is found in the cytoplasm. Its function is as follows. Essential for oogenesis; required for late follicle cell development. The sequence is that of Small ribosomal subunit protein eS1 from Drosophila virilis (Fruit fly).